A 435-amino-acid polypeptide reads, in one-letter code: Glutamyl-tRNA reductase (435 aa).

Substrate contacts are provided by residues 49 to 52 (TCNR), serine 109, 114 to 116 (ETQ), and glutamine 120. Catalysis depends on cysteine 50, which acts as the Nucleophile. Position 189–194 (189–194 (GAGEMS)) interacts with NADP(+).

The protein belongs to the glutamyl-tRNA reductase family. In terms of assembly, homodimer.

The catalysed reaction is (S)-4-amino-5-oxopentanoate + tRNA(Glu) + NADP(+) = L-glutamyl-tRNA(Glu) + NADPH + H(+). The protein operates within porphyrin-containing compound metabolism; protoporphyrin-IX biosynthesis; 5-aminolevulinate from L-glutamyl-tRNA(Glu): step 1/2. Catalyzes the NADPH-dependent reduction of glutamyl-tRNA(Glu) to glutamate 1-semialdehyde (GSA). The chain is Glutamyl-tRNA reductase from Listeria monocytogenes serotype 4b (strain CLIP80459).